A 448-amino-acid polypeptide reads, in one-letter code: Probable glycine dehydrogenase (decarboxylating) subunit 1 (448 aa).

The protein belongs to the GcvP family. N-terminal subunit subfamily. As to quaternary structure, the glycine cleavage system is composed of four proteins: P, T, L and H. In this organism, the P 'protein' is a heterodimer of two subunits.

It carries out the reaction N(6)-[(R)-lipoyl]-L-lysyl-[glycine-cleavage complex H protein] + glycine + H(+) = N(6)-[(R)-S(8)-aminomethyldihydrolipoyl]-L-lysyl-[glycine-cleavage complex H protein] + CO2. In terms of biological role, the glycine cleavage system catalyzes the degradation of glycine. The P protein binds the alpha-amino group of glycine through its pyridoxal phosphate cofactor; CO(2) is released and the remaining methylamine moiety is then transferred to the lipoamide cofactor of the H protein. The protein is Probable glycine dehydrogenase (decarboxylating) subunit 1 of Staphylococcus epidermidis (strain ATCC 35984 / DSM 28319 / BCRC 17069 / CCUG 31568 / BM 3577 / RP62A).